The chain runs to 223 residues: GrpE protein homolog, mitochondrial (223 aa).

It belongs to the GrpE family. In terms of assembly, component of the PAM complex, at least composed of mtHsp70, mge1, tim44, pam16, pam17 and pam18.

It is found in the mitochondrion matrix. Functionally, essential component of the PAM complex, a complex required for the translocation of transit peptide-containing proteins from the inner membrane into the mitochondrial matrix in an ATP-dependent manner. Seems to control the nucleotide-dependent binding of ssc1 to substrate proteins. The polypeptide is GrpE protein homolog, mitochondrial (mge1) (Schizosaccharomyces pombe (strain 972 / ATCC 24843) (Fission yeast)).